The primary structure comprises 569 residues: Tetratricopeptide repeat protein 22 (569 aa).

TPR repeat units lie at residues 66 to 99, 101 to 133, 203 to 237, 260 to 294, 295 to 328, 383 to 418, and 432 to 465; these read PAVR…HPGN, NAWA…MGLA, ATLY…LRQV, KDTF…AKNQ, PPIL…LRDP, FKAY…ALVF, and PELQ…DDAG.

This Homo sapiens (Human) protein is Tetratricopeptide repeat protein 22 (TTC22).